Reading from the N-terminus, the 452-residue chain is Alkane uptake protein A (452 aa).

The N-terminal stretch at 1–36 (MSERSVYMVLSPRFSVRAVSLAVAAVSASLSMPTSA) is a signal peptide.

This sequence belongs to the OmpP1/FadL family. In terms of assembly, interacts with the inner membrane protein AupB.

It is found in the cell outer membrane. Its function is as follows. Required for growth on alkanes. Probably involved in the uptake of micelle-solubilized alkanes. This chain is Alkane uptake protein A, found in Marinobacter nauticus (strain ATCC 49840 / DSM 8798 / CIP 103578 / SP17) (Marinobacter hydrocarbonoclasticus).